Here is a 300-residue protein sequence, read N- to C-terminus: Protein orai (300 aa).

Over 1–128 the chain is Cytoplasmic; the sequence is MPRSHDPSRV…SKAQLKASSR (128 aa). The interval 58–82 is disordered; it reads QPPSSGGGSRNVGGGDGAAGNSKNG. Positions 62–75 are enriched in gly residues; the sequence is SGGGSRNVGGGDGA. A helical membrane pass occupies residues 129–146; the sequence is TSALLAGFAMVCLVELQY. At 147–153 the chain is on the extracellular side; sequence DDSTSKP. A helical transmembrane segment spans residues 154–174; it reads LLIVLGVVTSLLVSVHLLALM. The Cytoplasmic segment spans residues 175 to 205; it reads MSTCILPYMEATGCTQDSPHLKLKFYIDLSW. A helical transmembrane segment spans residues 206 to 226; it reads LFSTCIGLLLFLVEIGVIFYV. Residues 227–237 are Extracellular-facing; that stretch reads KFTAVGYPTAG. A helical membrane pass occupies residues 238–258; that stretch reads YITTAMLIPVGIVFVLFSYLI. The Cytoplasmic portion of the chain corresponds to 259–300; that stretch reads HKNRVSHSLGRFKDKVDTMKQFLDVEANLQKSTIAPSTIRDI.

It belongs to the Orai family.

The protein resides in the membrane. In terms of biological role, ca(2+) release-activated Ca(2+)-like (CRAC-like) channel subunit which mediates Ca(2+) influx and increase in Ca(2+)-selective current by synergy with the Ca(2+) sensor, stim-1. Required for Ca(2+) and IP3-dependent contractile activity of sheath cells and the spermatheca. Affects brood size and somatic cell function. In Caenorhabditis briggsae, this protein is Protein orai (orai-1).